Reading from the N-terminus, the 349-residue chain is 11-beta-hydroxysteroid dehydrogenase 1A (349 aa).

A helical; Signal-anchor for type II membrane protein membrane pass occupies residues 10 to 30; that stretch reads LTAPFFTFFGLCFFLPPFYFF. Residues 54–80 and Asp105 each bind NADP(+); that span reads GASS…TARR. Residue Ser184 participates in substrate binding. Tyr197 functions as the Proton acceptor in the catalytic mechanism. NADP(+) contacts are provided by residues 197–201 and Lys201; that span reads YNASK.

Belongs to the short-chain dehydrogenases/reductases (SDR) family. In terms of tissue distribution, expressed in the above-ground part of seedlings, especially in the vascular tissues. Also detected in the buds and silique pedicels. Highly induced in oil-accumulating tissues of maturing seeds.

The protein resides in the lipid droplet. The protein localises to the membrane. It carries out the reaction an 11beta-hydroxysteroid + NADP(+) = an 11-oxosteroid + NADPH + H(+). It catalyses the reaction 17beta-estradiol + NADP(+) = estrone + NADPH + H(+). The catalysed reaction is corticosterone + NADP(+) = 11-dehydrocorticosterone + NADPH + H(+). The enzyme catalyses cortisone + NADPH + H(+) = cortisol + NADP(+). Catalyzes 11-beta, 17-beta-hydroxysteroid and reduces 17-beta-ketosteroids. Involved in regulating plant growth and development, probably promoting or mediating brassinosteroid effects. Plays a role during seed maturation. This Arabidopsis thaliana (Mouse-ear cress) protein is 11-beta-hydroxysteroid dehydrogenase 1A (HSD1).